The following is a 250-amino-acid chain: 2,3-bisphosphoglycerate-dependent phosphoglycerate mutase (250 aa).

Residues 10–17 (RHGESQWN), 23–24 (TG), Arg-62, 89–92 (ERHY), Lys-100, 116–117 (RR), and 185–186 (GN) contribute to the substrate site. The active-site Tele-phosphohistidine intermediate is the His-11. Glu-89 functions as the Proton donor/acceptor in the catalytic mechanism.

The protein belongs to the phosphoglycerate mutase family. BPG-dependent PGAM subfamily. As to quaternary structure, homodimer.

The enzyme catalyses (2R)-2-phosphoglycerate = (2R)-3-phosphoglycerate. It participates in carbohydrate degradation; glycolysis; pyruvate from D-glyceraldehyde 3-phosphate: step 3/5. Its function is as follows. Catalyzes the interconversion of 2-phosphoglycerate and 3-phosphoglycerate. The sequence is that of 2,3-bisphosphoglycerate-dependent phosphoglycerate mutase from Shigella boydii serotype 4 (strain Sb227).